The following is a 259-amino-acid chain: Methanethiol S-methyltransferase 2 (259 aa).

5 helical membrane passes run 5-25, 46-66, 88-108, 115-135, and 182-202; these read LAIL…FLYA, LGEA…QHSV, TYVL…RPIP, SGIA…IAFA, and FLLA…FALA.

Belongs to the nurim family.

It is found in the membrane. It carries out the reaction methanethiol + S-adenosyl-L-methionine = dimethyl sulfide + S-adenosyl-L-homocysteine + H(+). In terms of biological role, catalyzes the methylation of methanethiol (MeSH) to yield dimethylsulphide (DMS). The chain is Methanethiol S-methyltransferase 2 from Bradyrhizobium diazoefficiens (strain JCM 10833 / BCRC 13528 / IAM 13628 / NBRC 14792 / USDA 110).